Consider the following 5202-residue polypeptide: Usherin (5202 aa).

The N-terminal stretch at 1 to 31 (MNCPVLSLGSGFLFQVIEMLIFAYFASISLT) is a signal peptide. The Extracellular segment spans residues 32-5042 (ESRGLFPRLE…KSTEFYSELW (5011 aa)). The 247-residue stretch at 271-517 (QDFRLYQVAL…AVDEITISGR (247 aa)) folds into the Laminin N-terminal domain. N-linked (GlcNAc...) asparagine glycosylation is found at Asn361 and Asn451. 40 disulfides stabilise this stretch: Cys518/Cys527, Cys520/Cys536, Cys538/Cys549, Cys552/Cys572, Cys575/Cys584, Cys577/Cys605, Cys608/Cys617, Cys620/Cys638, Cys641/Cys655, Cys643/Cys662, Cys664/Cys673, Cys676/Cys691, Cys694/Cys708, Cys696/Cys715, Cys717/Cys726, Cys729/Cys744, Cys747/Cys759, Cys749/Cys766, Cys768/Cys777, Cys780/Cys792, Cys795/Cys808, Cys797/Cys815, Cys817/Cys826, Cys829/Cys844, Cys847/Cys861, Cys849/Cys868, Cys870/Cys879, Cys882/Cys897, Cys900/Cys913, Cys902/Cys920, Cys922/Cys931, Cys934/Cys948, Cys951/Cys963, Cys953/Cys970, Cys972/Cys982, Cys985/Cys999, Cys1002/Cys1014, Cys1004/Cys1021, Cys1023/Cys1032, and Cys1035/Cys1050. Laminin EGF-like domains follow at residues 518–574 (CQCH…NCKP), 575–640 (CQCN…VCKP), 641–693 (CDCD…GCSP), 694–746 (CNCN…GCEP), 747–794 (CQCN…NCKA), 795–846 (CDCD…LCLP), 847–899 (CNCD…HCQM), 900–950 (CECD…GCLP), 951–1001 (CSCH…RCQP), and 1002–1052 (CNCH…GCSK). Residues Asn587 and Asn611 are each glycosylated (N-linked (GlcNAc...) asparagine). An N-linked (GlcNAc...) asparagine glycan is attached at Asn650. A glycan (N-linked (GlcNAc...) asparagine) is linked at Asn697. N-linked (GlcNAc...) asparagine glycans are attached at residues Asn839, Asn856, and Asn862. N-linked (GlcNAc...) asparagine glycosylation occurs at Asn888. N-linked (GlcNAc...) asparagine glycosylation is present at Asn944. Residue Asn1011 is glycosylated (N-linked (GlcNAc...) asparagine). Fibronectin type-III domains follow at residues 1058–1146 (PPPR…TKPG), 1148–1244 (PEGN…APPQ), 1245–1363 (RLSP…SAPV), and 1364–1468 (FMIP…AAPA). Residues Asn1071, Asn1151, and Asn1174 are each glycosylated (N-linked (GlcNAc...) asparagine). N-linked (GlcNAc...) asparagine glycans are attached at residues Asn1379, Asn1388, Asn1479, and Asn1635. 2 Laminin G-like domains span residues 1517–1709 (MKGI…WEGC) and 1714–1891 (NEGA…LDGC). Cys1672 and Cys1709 are oxidised to a cystine. Asn1779 carries an N-linked (GlcNAc...) asparagine glycan. A disulfide bridge links Cys1862 with Cys1891. Fibronectin type-III domains lie at 1869–1955 (TRGA…AAPQ), 1957–2054 (VPTP…TPQE), 2055–2144 (APQE…LPPE), 2145–2239 (HVDS…TDED), 2243–2330 (GVPA…APPE), 2331–2433 (GTVN…MPPG), 2437–2531 (GVLP…TAED), 2535–2622 (PVVP…TLPG), 2624–2722 (PEGI…TRPS), 2726–2819 (GVQP…THPT), 2820–2923 (VPQN…TLAG), 2927–3018 (RGAN…TCDG), 3022–3112 (GMLP…TPSD), and 3113–3209 (IPTP…CCEE). N-linked (GlcNAc...) asparagine glycosylation is found at Asn1903, Asn2011, Asn2014, Asn2048, Asn2130, Asn2182, Asn2195, Asn2258, Asn2285, Asn2322, Asn2377, Asn2382, Asn2407, and Asn2413. N-linked (GlcNAc...) asparagine glycans are attached at residues Asn2581, Asn2584, Asn2656, Asn2710, Asn2770, and Asn2788. N-linked (GlcNAc...) asparagine glycosylation is found at Asn2930, Asn2937, Asn2970, Asn3032, and Asn3099. 4 N-linked (GlcNAc...) asparagine glycosylation sites follow: Asn3217, Asn3330, Asn3419, and Asn3433. 2 cysteine pairs are disulfide-bonded: Cys3371–Cys3444 and Cys3399–Cys3425. Fibronectin type-III domains lie at 3403-3497 (CPAS…TKED), 3501-3589 (GVSP…TQGV), 3592-3682 (SILP…AAPE), 3684-3770 (VWVT…TPMS), 3774-3865 (EIYP…TPEA), 3866-3963 (APMD…TLEA), 3964-4067 (PPQD…SSPS), 4068-4153 (GLRN…TDEA), 4157-4261 (SQLA…TLQA), 4262-4357 (PPEG…AAPS), 4358-4445 (EVSP…ALPE), 4446-4530 (NMDS…TSPS), 4534-4630 (GMEP…TPEI), 4636-4733 (PPPH…TGPA), 4734-4827 (PPEG…THPA), and 4828-4927 (PPSG…SFTT). N-linked (GlcNAc...) asparagine glycosylation is found at Asn3653, Asn3694, Asn3733, Asn3780, and Asn3849. An N-linked (GlcNAc...) asparagine glycan is attached at Asn3984. Residues Asn4202, Asn4226, Asn4317, and Asn4418 are each glycosylated (N-linked (GlcNAc...) asparagine). Residues 4518–4541 (ILSPLVKDRTSPSAPSGMEPPKLQ) are disordered. N-linked (GlcNAc...) asparagine glycans are attached at residues Asn4564, Asn4583, Asn4691, Asn4754, and Asn4800. Residues Asn4943 and Asn4950 are each glycosylated (N-linked (GlcNAc...) asparagine). The chain crosses the membrane as a helical span at residues 5043–5063 (FIVLMAMLGLILLAIFLSLIL). Topologically, residues 5064 to 5202 (QRKIHKEPYI…ERTTFTDTHL (139 aa)) are cytoplasmic. The short motif at 5200–5202 (THL) is the PDZ-binding element.

As to quaternary structure, interacts with collagen IV and fibronectin via its laminin EGF-like domains. Interaction with collagen may be required for stable integration into the basement membrane. Interacts with NINL. Interacts with USH1C. Component of USH2 complex, composed of ADGRV1, PDZD7, USH2A and WHRN. Interacts with ADGRV1/MASS1 (via N-terminal PDZ domain). Interacts (via the cytoplasmic region) with WHRN. Interacts (via the cytoplasmic region) with PDZD7. Interacts (via the cytoplasmic region) with VEZT and MYO7A (via MyTH4-FERM domains); the interaction associates VEZT with the USH2 complex at the stereocilia base. In terms of tissue distribution, present in the basement membrane of many, but not all tissues. Expressed in retina, cochlea, small and large intestine, pancreas, bladder, prostate, esophagus, trachea, thymus, salivary glands, placenta, ovary, fallopian tube, uterus and testis. Absent in many other tissues such as heart, lung, liver, kidney and brain. In the retina, it is present in the basement membranes in the Bruch's layer choroid capillary basement membranes, where it localizes just beneath the retinal pigment epithelial cells (at protein level). Weakly expressed. Isoform 2 is expressed in fetal eye, cochlea and heart, and at very low level in brain, CNS, intestine, skeleton, tongue, kidney and lung. Isoform 2 is not expressed in stomach and liver. In adult tissues, isoform 2 is expressed in neural retina and testis, and at low level in brain, heart, kidney and liver. Isoform 1 displays a similar pattern of expression but is expressed at very low level in fetal cochlea.

It localises to the cell projection. The protein localises to the stereocilium membrane. Its subcellular location is the secreted. Involved in hearing and vision as member of the USH2 complex. In the inner ear, required for the maintenance of the hair bundle ankle formation, which connects growing stereocilia in developing cochlear hair cells. In retina photoreceptors, the USH2 complex is required for the maintenance of periciliary membrane complex that seems to play a role in regulating intracellular protein transport. In Homo sapiens (Human), this protein is Usherin (USH2A).